Consider the following 741-residue polypeptide: MEKMHSKSVSPVPFNNSNNTSLGGLRKSSSIPTLAVPECESMGNKHIEEERTNNITTMAMKRRLLDPQNKKKQNRFERYSSSNHAQEQSSEENFCRSKKDSTVLKFGIDSILKNKNAEKVPKGISNAGRIQDERFTEACTNTSSNVNPLSKYFKPSSNDQLGARRTATSFSSSSEASDSKSCCTNNNEEARYKYRVIDKRKSADSDWSEDATGNEADDPDDHINQDNCDLASTLEQSRIVALEILKNKRLRLDSSEALNDLTPYDQLSRTEDQQISRRVEMMNHQAFARENNEWPRSFSSGLQDPFAKNLPNAFLPFYMQPYLRAYYNIQKYIYHKKLLNRNDRFYREANVENDNYKTEESLRSPSETKQYSPDASTFYPIRTEDSNGSRNLKVDVEEGDKEANKLFKDLCVSVGDRLSNALSYGRKDYNGLSTSQTSGNRFLNFSDKGIQAGSYYQTGERNDSLAGPLKNSGMSFDFPPKFGSNNSSTDKPEQEDNNPQTIGSEYQINTQRSMKDNLLTAKLLENEAKLRYGNIVTQYPRPFSWPFAASVRKSYDPALRSYFSRFNNSDAPHYGAAQVNPTAGNNFKSMLPGNFENPYFFNELNTLDTTGFLSRQYGHMSSSQNPHSETQNRSEEVRGTVKKRRKWNRAVFSLMQRRGLEKSFQSQKYVAKPERRKLADALSLTDAQVKIWFQNRRMKWRQEIKMKNRGLVPVHILGQDHEIEKEKTQTPSDEGEVINVD.

7 disordered regions span residues 1-30 (MEKM…KSSS), 61-96 (KRRL…NFCR), 146-183 (VNPL…KSCC), 203-226 (ADSD…INQD), 357-383 (KTEE…PIRT), 476-501 (FDFP…NPQT), and 616-642 (QYGH…GTVK). Residues 7 to 19 (KSVSPVPFNNSNN) are compositionally biased toward low complexity. Basic and acidic residues predominate over residues 63–78 (RLLDPQNKKKQNRFER). Residues 79–92 (YSSSNHAQEQSSEE) show a composition bias toward polar residues. The segment covering 169 to 181 (SFSSSSEASDSKS) has biased composition (low complexity). A compositionally biased stretch (polar residues) spans 363 to 375 (RSPSETKQYSPDA). The segment covering 616–629 (QYGHMSSSQNPHSE) has biased composition (polar residues). A compositionally biased stretch (basic and acidic residues) spans 630 to 639 (TQNRSEEVRG). Positions 645 to 704 (RKWNRAVFSLMQRRGLEKSFQSQKYVAKPERRKLADALSLTDAQVKIWFQNRRMKWRQEI) form a DNA-binding region, homeobox. A disordered region spans residues 722-741 (EIEKEKTQTPSDEGEVINVD).

This sequence belongs to the H2.0 homeobox family. As to expression, expressed in the tissues of endodermal origin.

It is found in the nucleus. The chain is Homeobox protein AHox1 (AHOX1) from Halocynthia roretzi (Sea squirt).